We begin with the raw amino-acid sequence, 238 residues long: Ribosomal RNA small subunit methyltransferase G (238 aa).

S-adenosyl-L-methionine-binding positions include Gly-77, Phe-82, 128-129, and Arg-147; that span reads AE. Positions 219–238 are disordered; sequence RQTPKKYPRKAGLPNKEPIE.

It belongs to the methyltransferase superfamily. RNA methyltransferase RsmG family.

It localises to the cytoplasm. Its function is as follows. Specifically methylates the N7 position of guanine in position 535 of 16S rRNA. The protein is Ribosomal RNA small subunit methyltransferase G of Oceanobacillus iheyensis (strain DSM 14371 / CIP 107618 / JCM 11309 / KCTC 3954 / HTE831).